A 124-amino-acid polypeptide reads, in one-letter code: Small polypeptide ROTUNDIFOLIA LIKE 3 (124 aa).

A disordered region spans residues 1–23 (MEDERWKLSSSKGRSKSGRSCSS). N-linked (GlcNAc...) asparagine glycans are attached at residues Asn-35 and Asn-38. A helical transmembrane segment spans residues 59–75 (AWSAAGAGGGGASSSSS). The disordered stretch occupies residues 60–95 (WSAAGAGGGGASSSSSSQHQHQQQQQQSNNSQRLSK). The segment covering 71–91 (SSSSSSQHQHQQQQQQSNNSQ) has biased composition (low complexity). The N-linked (GlcNAc...) asparagine glycan is linked to Asn-88. The required for DVL/RTFL small polypeptide activity stretch occupies residues 92–124 (RLSKKCVEAVKEHRARFYIVRRCVSMLVCWRDY).

The protein belongs to the DVL/RTFL small polypeptides family.

It localises to the cell membrane. Small polypeptide acting as a regulatory molecule which coordinates cellular responses required for differentiation, growth and development, probably by restricting polar cell proliferation in lateral organs (e.g. leaves and petioles). The sequence is that of Small polypeptide ROTUNDIFOLIA LIKE 3 from Oryza sativa subsp. japonica (Rice).